A 165-amino-acid polypeptide reads, in one-letter code: Cyclic pyranopterin monophosphate synthase (165 aa).

Substrate contacts are provided by residues 76 to 78 (LCH) and 114 to 115 (ME). Asp-129 is a catalytic residue.

This sequence belongs to the MoaC family. In terms of assembly, homohexamer; trimer of dimers.

The enzyme catalyses (8S)-3',8-cyclo-7,8-dihydroguanosine 5'-triphosphate = cyclic pyranopterin phosphate + diphosphate. It functions in the pathway cofactor biosynthesis; molybdopterin biosynthesis. In terms of biological role, catalyzes the conversion of (8S)-3',8-cyclo-7,8-dihydroguanosine 5'-triphosphate to cyclic pyranopterin monophosphate (cPMP). In Brucella melitensis biotype 2 (strain ATCC 23457), this protein is Cyclic pyranopterin monophosphate synthase.